A 552-amino-acid polypeptide reads, in one-letter code: HTH-type transcriptional regulator SgrR (552 aa).

Residues 1–116 form the HTH marR-type domain; that stretch reads MPSGRLQQQF…LISHLGRSFR (116 aa). The segment at residues 26 to 49 is a DNA-binding region (H-T-H motif); sequence LNELADLLNCSRRHMRTLLNTMQA. Residues 163 to 493 form a solute-binding region; that stretch reads ELEADIAHHW…RDWQDDAAQW (331 aa).

Its function is as follows. Activates the small RNA gene sgrS under glucose-phosphate stress conditions as well as yfdZ. Represses its own transcription under both stress and non-stress conditions. Might act as a sensor of the intracellular accumulation of phosphoglucose by binding these molecules in its C-terminal solute-binding domain. This chain is HTH-type transcriptional regulator SgrR, found in Salmonella choleraesuis (strain SC-B67).